The primary structure comprises 1155 residues: DNA-directed RNA polymerase subunit beta (1155 aa).

It belongs to the RNA polymerase beta chain family. As to quaternary structure, the RNAP catalytic core consists of 2 alpha, 1 beta, 1 beta' and 1 omega subunit. When a sigma factor is associated with the core the holoenzyme is formed, which can initiate transcription.

The catalysed reaction is RNA(n) + a ribonucleoside 5'-triphosphate = RNA(n+1) + diphosphate. DNA-dependent RNA polymerase catalyzes the transcription of DNA into RNA using the four ribonucleoside triphosphates as substrates. In Borrelia hermsii (strain HS1 / DAH), this protein is DNA-directed RNA polymerase subunit beta.